The sequence spans 275 residues: Apoptosis inhibitor 1 (275 aa).

BIR repeat units follow at residues 24 to 91 (LIER…CVYA) and 126 to 193 (PSAR…CYFV). The Zn(2+) site is built by cysteine 163, cysteine 166, histidine 183, and cysteine 190. The segment at 227-263 (CKVCLERQRDAVLLPCRHFCVCMQCYFALDGKCPTCR) adopts an RING-type zinc-finger fold.

In terms of biological role, acts by blocking cellular apoptosis rather than by preventing viral stimulation of apoptosis. In Orgyia pseudotsugata (Douglas-fir tussock moth), this protein is Apoptosis inhibitor 1 (IAP1).